The sequence spans 125 residues: Large ribosomal subunit protein bL12 (125 aa).

Belongs to the bacterial ribosomal protein bL12 family. Homodimer. Part of the ribosomal stalk of the 50S ribosomal subunit. Forms a multimeric L10(L12)X complex, where L10 forms an elongated spine to which 2 to 4 L12 dimers bind in a sequential fashion. Binds GTP-bound translation factors.

In terms of biological role, forms part of the ribosomal stalk which helps the ribosome interact with GTP-bound translation factors. Is thus essential for accurate translation. The sequence is that of Large ribosomal subunit protein bL12 from Rickettsia prowazekii (strain Madrid E).